Here is a 100-residue protein sequence, read N- to C-terminus: Sweet protein mabinlin-4 (100 aa).

4 cysteine pairs are disulfide-bonded: Cys4/Cys49, Cys17/Cys38, Cys39/Cys87, and Cys51/Cys95.

It belongs to the 2S seed storage albumins family. In terms of assembly, heterodimer of a small A and a large B chain linked by disulfide bonds.

Heat stable 2S seed storage protein having sweetness-inducing activity. The protein is Sweet protein mabinlin-4 of Capparis masaikai (Mabinlang).